The primary structure comprises 894 residues: DNA mismatch repair protein MutS (894 aa).

632 to 639 lines the ATP pocket; that stretch reads GPNMGGKS.

The protein belongs to the DNA mismatch repair MutS family.

This protein is involved in the repair of mismatches in DNA. It is possible that it carries out the mismatch recognition step. This protein has a weak ATPase activity. The chain is DNA mismatch repair protein MutS from Paraburkholderia phytofirmans (strain DSM 17436 / LMG 22146 / PsJN) (Burkholderia phytofirmans).